Reading from the N-terminus, the 515-residue chain is MNGAQALINTLVDGGVDVCFANPGTSEMHFVAALDAVPRMRGMLTLFEGVATGAADGYARIAGRPAAVLLHLGPGLGNGLANLHNARRARVPMVVVVGDHATYHKKYDAPLESDIDAVAGTVSGWVRRTEAAADVGADAEAAIAASRSGSQIATLILPADVCWSDGAHAAAGVPAQAAAAPVDVGPVAGVLRSGEPAMMLIGGDATRGPGLTAAARIVQATGARWLCETFPTCLERGAGIPAVERLAYFAEGAAAQLDGVKHLVLAGARSPVSFFAYPGMPSDLVPAGCEVHVLAEPGGAADALAALADEVAPGTVAPVAGASRPQLPTGDLTSVSAADVVGALLPERAIVVDESNTCGVLLPQATAGAPAHDWLTLTGGAIGYGIPAAVGAAVAAPDRPVLCLESDGSAMYTISGLWSQARENLDVTTVIYNNGAYDILRIELQRVGAGSDPGPKALDLLDISRPTMDFVKIAEGMGVPARRVTTCEEFADALRAAFAEPGPHLIDVVVPSLVG.

E48 serves as a coordination point for thiamine diphosphate. FAD contacts are provided by residues 249–269 (FAEG…AGAR) and 283–302 (DLVP…GAAD). The tract at residues 357 to 436 (TCGVLLPQAT…VTTVIYNNGA (80 aa)) is thiamine pyrophosphate binding. 2 residues coordinate Mg(2+): D407 and N434.

It belongs to the TPP enzyme family. As to quaternary structure, heterodimer of large catalytic subunit and small regulatory subunit. Mg(2+) serves as cofactor. The cofactor is thiamine diphosphate.

The enzyme catalyses 2 pyruvate + H(+) = (2S)-2-acetolactate + CO2. It functions in the pathway amino-acid biosynthesis; L-isoleucine biosynthesis; L-isoleucine from 2-oxobutanoate: step 1/4. Its pathway is amino-acid biosynthesis; L-valine biosynthesis; L-valine from pyruvate: step 1/4. Catalyzes the conversion of 2 pyruvate molecules into acetolactate in the first common step of the biosynthetic pathway of the branched-amino acids such as leucine, isoleucine, and valine. This Mycobacterium tuberculosis (strain ATCC 25618 / H37Rv) protein is Putative acetolactate synthase large subunit IlvX (ilvX).